The following is a 198-amino-acid chain: tRNA (pseudouridine(54)-N(1))-methyltransferase (198 aa).

Leu-128 lines the S-adenosyl-L-methionine pocket.

This sequence belongs to the methyltransferase superfamily. TrmY family. In terms of assembly, homodimer.

It is found in the cytoplasm. The catalysed reaction is pseudouridine(54) in tRNA + S-adenosyl-L-methionine = N(1)-methylpseudouridine(54) in tRNA + S-adenosyl-L-homocysteine + H(+). Functionally, specifically catalyzes the N1-methylation of pseudouridine at position 54 (Psi54) in tRNAs. The polypeptide is tRNA (pseudouridine(54)-N(1))-methyltransferase (Haloferax volcanii (strain ATCC 29605 / DSM 3757 / JCM 8879 / NBRC 14742 / NCIMB 2012 / VKM B-1768 / DS2) (Halobacterium volcanii)).